Consider the following 226-residue polypeptide: Lipoprotein-releasing system ATP-binding protein LolD 1 (226 aa).

The ABC transporter domain occupies 6 to 226 (LRLDKVTRSF…TLREGKVVAA (221 aa)). 42 to 49 (GPSGAGKS) is a binding site for ATP.

This sequence belongs to the ABC transporter superfamily. Lipoprotein translocase (TC 3.A.1.125) family. In terms of assembly, the complex is composed of two ATP-binding proteins (LolD) and two transmembrane proteins (LolC and LolE).

It localises to the cell inner membrane. Its function is as follows. Part of the ABC transporter complex LolCDE involved in the translocation of mature outer membrane-directed lipoproteins, from the inner membrane to the periplasmic chaperone, LolA. Responsible for the formation of the LolA-lipoprotein complex in an ATP-dependent manner. This is Lipoprotein-releasing system ATP-binding protein LolD 1 from Rhodospirillum rubrum (strain ATCC 11170 / ATH 1.1.1 / DSM 467 / LMG 4362 / NCIMB 8255 / S1).